A 319-amino-acid polypeptide reads, in one-letter code: MDNSGKTEKFQLHVPNLEELCQVLESGLNKNFSDVKVSVTDCPDLTQQPFGFPVKGLCGKPRITDVGGVPNLIPLVKLDKVYNMNSVSKEVELPGAFILGAGAISFKTAGINGELMPLVLTEAEGRSAVNASYFSSINPEDGKCLQEKYSDRFDDCDFGLLANLYACEGKPGKVIEVKACRRTGEDSLVSCMRKTMAEHYGEKSVALGGTFIIQKGKAKIHIMPREFSVCPLNTDEDVNNWLRHFEVSAPLIFQTVMISRDPGLDLRVEHTHGFSHHGEGGHYYTDTTPNTVEYLGYFLPAETVYRIDRPTETHNVGRD.

Zn(2+) contacts are provided by H270, H272, and H282.

In terms of assembly, monomer. The cofactor is Zn(2+).

The protein resides in the nucleus. The protein localises to the cytoplasm. Exhibits ester hydrolase activity on the substrate p-nitrophenyl acetate, in vitro. May regulate DNA damage and repair by regulating HIF1A degradation via chaperone-mediated autophagy (CMA). This Danio rerio (Zebrafish) protein is Ester hydrolase C11orf54 homolog.